A 316-amino-acid chain; its full sequence is Transaldolase (316 aa).

Catalysis depends on K132, which acts as the Schiff-base intermediate with substrate.

It belongs to the transaldolase family. Type 1 subfamily. In terms of assembly, homodimer.

The protein resides in the cytoplasm. It carries out the reaction D-sedoheptulose 7-phosphate + D-glyceraldehyde 3-phosphate = D-erythrose 4-phosphate + beta-D-fructose 6-phosphate. The protein operates within carbohydrate degradation; pentose phosphate pathway; D-glyceraldehyde 3-phosphate and beta-D-fructose 6-phosphate from D-ribose 5-phosphate and D-xylulose 5-phosphate (non-oxidative stage): step 2/3. Transaldolase is important for the balance of metabolites in the pentose-phosphate pathway. In Aeromonas salmonicida (strain A449), this protein is Transaldolase.